The chain runs to 186 residues: Probable RNA 2'-phosphotransferase (186 aa).

Belongs to the KptA/TPT1 family.

In terms of biological role, removes the 2'-phosphate from RNA via an intermediate in which the phosphate is ADP-ribosylated by NAD followed by a presumed transesterification to release the RNA and generate ADP-ribose 1''-2''-cyclic phosphate (APPR&gt;P). May function as an ADP-ribosylase. In Hahella chejuensis (strain KCTC 2396), this protein is Probable RNA 2'-phosphotransferase.